The chain runs to 198 residues: Chorion protein S19 (198 aa).

A signal peptide spans 1–16 (MNKFATLAVFISVCLA).

Belongs to the chorion protein S19 family.

Its subcellular location is the secreted. Functionally, chorion membrane (egg shell) protein; plays a role in protecting the egg from the environment. This Drosophila virilis (Fruit fly) protein is Chorion protein S19 (Cp19).